We begin with the raw amino-acid sequence, 599 residues long: Protein linkin (599 aa).

Residues 1-19 (MKKILPIIWLINLVSGSLS) form the signal peptide. At 20–553 (LEKKAPDLLG…SRLYVTPSAL (534 aa)) the chain is on the extracellular side. N50, N117, N163, N361, and N378 each carry an N-linked (GlcNAc...) asparagine glycan. Residues 554-574 (IVQSLAVIALVCCMLLMVVVF) form a helical membrane-spanning segment. Residues 575–599 (LHYREKKEDRYERQQQSHRFHFDAM) are Cytoplasmic-facing.

It belongs to the TIP family. Expressed in all somatic gonadal cells including distal tip cells, anchor cell, uterine precursor cells and spermatheca precursor cells of the hermaphrodite. Also expressed in the pharynx, pharyngeal-intestinal valve, intestine, excretory cell and canal, seam cells, a subset of hypodermal cells, vulval precursor cells of the hermaphrodite and hook precursor cells in the male.

The protein resides in the apical cell membrane. Its subcellular location is the lateral cell membrane. Probable cell adhesion protein involved in gonadal cell migration. The chain is Protein linkin from Caenorhabditis elegans.